The sequence spans 321 residues: Mas-related G-protein coupled receptor member H (321 aa).

Over 1-35 the chain is Extracellular; that stretch reads MEPLAMTLYPLESTQPTRNKTPNETTWSSEHTDDH. N-linked (GlcNAc...) asparagine glycosylation is present at Asn-23. Residues 36–56 traverse the membrane as a helical segment; it reads TYFLVSLVICSLGLAGNGLLI. At 57-71 the chain is on the cytoplasmic side; the sequence is WFLIFCIKRKPFTIY. Residues 72-92 traverse the membrane as a helical segment; it reads ILHLAIADFMVLLCSSIMKLV. Residues 93–102 are Extracellular-facing; that stretch reads NTFHIYNMTL. An N-linked (GlcNAc...) asparagine glycan is attached at Asn-99. The helical transmembrane segment at 103–126 threads the bilayer; that stretch reads ESYAILFMIFGYNTGLHLLTAISV. Over 127–147 the chain is Cytoplasmic; sequence ERCLSVLYPIWYQCQRPKHQS. A helical membrane pass occupies residues 148–168; that stretch reads AVACMLLWALSVLVSGLENFF. Residues 169–188 are Extracellular-facing; it reads CILEVKPQFPECRYVYIFSC. A helical membrane pass occupies residues 189 to 209; it reads ILTFLVFVPLMIFSNLILFIQ. The Cytoplasmic segment spans residues 210–225; sequence VCCNLKPRQPTKLYVI. The chain crosses the membrane as a helical span at residues 226–246; sequence IMTTVILFLVFAMPMKVLLII. Residue Gly-247 is a topological domain, extracellular. Residues 248–271 traverse the membrane as a helical segment; it reads YYSSSLDDSVWDSLPYLNMLSTIN. Residues 272–320 lie on the Cytoplasmic side of the membrane; it reads CSINPIVYFVVGSLRRKRSRKSLKEALQKVFEEKPVVASRENVTQFSLP.

The protein belongs to the G-protein coupled receptor 1 family. Mas subfamily.

It is found in the cell membrane. Orphan receptor. May regulate nociceptor function and/or development, including the sensation or modulation of pain. This chain is Mas-related G-protein coupled receptor member H (Mrgprh), found in Mus musculus (Mouse).